The chain runs to 546 residues: Chaperonin GroEL 2 (546 aa).

ATP-binding positions include 29-32, 86-90, Gly418, 482-484, and Asp498; these read TLGP, DGTTT, and NAA.

The protein belongs to the chaperonin (HSP60) family. In terms of assembly, forms a cylinder of 14 subunits composed of two heptameric rings stacked back-to-back. Interacts with the co-chaperonin GroES.

It is found in the cytoplasm. It carries out the reaction ATP + H2O + a folded polypeptide = ADP + phosphate + an unfolded polypeptide.. Together with its co-chaperonin GroES, plays an essential role in assisting protein folding. The GroEL-GroES system forms a nano-cage that allows encapsulation of the non-native substrate proteins and provides a physical environment optimized to promote and accelerate protein folding. This chain is Chaperonin GroEL 2, found in Corynebacterium diphtheriae (strain ATCC 700971 / NCTC 13129 / Biotype gravis).